The following is a 105-amino-acid chain: Heat shock protein HspQ (105 aa).

Positions 76-105 (EMRDEHPEQPSMDELARTIRKQLQAPRLRN) are disordered.

It belongs to the HspQ family.

The protein localises to the cytoplasm. In terms of biological role, involved in the degradation of certain denaturated proteins, including DnaA, during heat shock stress. In Salmonella agona (strain SL483), this protein is Heat shock protein HspQ.